Consider the following 174-residue polypeptide: NADH-quinone oxidoreductase subunit B (174 aa).

[4Fe-4S] cluster is bound by residues Cys53, Cys54, Cys118, and Cys148.

Belongs to the complex I 20 kDa subunit family. In terms of assembly, NDH-1 is composed of 14 different subunits. Subunits NuoB, C, D, E, F, and G constitute the peripheral sector of the complex. The cofactor is [4Fe-4S] cluster.

It is found in the cell inner membrane. It carries out the reaction a quinone + NADH + 5 H(+)(in) = a quinol + NAD(+) + 4 H(+)(out). NDH-1 shuttles electrons from NADH, via FMN and iron-sulfur (Fe-S) centers, to quinones in the respiratory chain. Couples the redox reaction to proton translocation (for every two electrons transferred, four hydrogen ions are translocated across the cytoplasmic membrane), and thus conserves the redox energy in a proton gradient. This chain is NADH-quinone oxidoreductase subunit B, found in Ruegeria sp. (strain TM1040) (Silicibacter sp.).